A 153-amino-acid polypeptide reads, in one-letter code: Histone H2B.10 (153 aa).

Basic and acidic residues-rich tracts occupy residues 1–28 and 36–53; these read MAPK…EKAP and EKRL…EGKK. A disordered region spans residues 1–61; that stretch reads MAPKAEKKPA…KKAGRKKAKK (61 aa). Residues Lys-7 and Lys-37 each carry the N6-acetyllysine modification. Lys-149 is covalently cross-linked (Glycyl lysine isopeptide (Lys-Gly) (interchain with G-Cter in ubiquitin)).

It belongs to the histone H2B family. In terms of assembly, the nucleosome is a histone octamer containing two molecules each of H2A, H2B, H3 and H4 assembled in one H3-H4 heterotetramer and two H2A-H2B heterodimers. The octamer wraps approximately 147 bp of DNA. In terms of processing, can be acetylated to form H2BK6ac and H2BK33ac. Post-translationally, monoubiquitinated by BRE1 to form H2BK143ub1 and deubiquitinated by UBP26. Required for heterochromatic histone H3 di- and trimethylation at H3K4me. May give a specific tag for epigenetic transcriptional activation.

It is found in the nucleus. It localises to the chromosome. Its function is as follows. Core component of nucleosome. Nucleosomes wrap and compact DNA into chromatin, limiting DNA accessibility to the cellular machineries which require DNA as a template. Histones thereby play a central role in transcription regulation, DNA repair, DNA replication and chromosomal stability. DNA accessibility is regulated via a complex set of post-translational modifications of histones, also called histone code, and nucleosome remodeling. In Oryza sativa subsp. indica (Rice), this protein is Histone H2B.10 (H2B.10).